The chain runs to 191 residues: Protein GrpE (191 aa).

Positions 1–21 (MSDKKKNAEEFEETFSDKTSE) are enriched in basic and acidic residues. Residues 1–39 (MSDKKKNAEEFEETFSDKTSEDESTVENETVEENENEDV) form a disordered region. A compositionally biased stretch (acidic residues) spans 22–38 (DESTVENETVEENENED).

The protein belongs to the GrpE family. As to quaternary structure, homodimer.

It localises to the cytoplasm. Participates actively in the response to hyperosmotic and heat shock by preventing the aggregation of stress-denatured proteins, in association with DnaK and GrpE. It is the nucleotide exchange factor for DnaK and may function as a thermosensor. Unfolded proteins bind initially to DnaJ; upon interaction with the DnaJ-bound protein, DnaK hydrolyzes its bound ATP, resulting in the formation of a stable complex. GrpE releases ADP from DnaK; ATP binding to DnaK triggers the release of the substrate protein, thus completing the reaction cycle. Several rounds of ATP-dependent interactions between DnaJ, DnaK and GrpE are required for fully efficient folding. In Tetragenococcus halophilus (Pediococcus halophilus), this protein is Protein GrpE.